The sequence spans 371 residues: 4-hydroxy-3-methylbut-2-en-1-yl diphosphate synthase (flavodoxin) (371 aa).

Residues Cys270, Cys273, Cys305, and Glu312 each contribute to the [4Fe-4S] cluster site.

It belongs to the IspG family. [4Fe-4S] cluster is required as a cofactor.

It catalyses the reaction (2E)-4-hydroxy-3-methylbut-2-enyl diphosphate + oxidized [flavodoxin] + H2O + 2 H(+) = 2-C-methyl-D-erythritol 2,4-cyclic diphosphate + reduced [flavodoxin]. It participates in isoprenoid biosynthesis; isopentenyl diphosphate biosynthesis via DXP pathway; isopentenyl diphosphate from 1-deoxy-D-xylulose 5-phosphate: step 5/6. Functionally, converts 2C-methyl-D-erythritol 2,4-cyclodiphosphate (ME-2,4cPP) into 1-hydroxy-2-methyl-2-(E)-butenyl 4-diphosphate. In Shewanella loihica (strain ATCC BAA-1088 / PV-4), this protein is 4-hydroxy-3-methylbut-2-en-1-yl diphosphate synthase (flavodoxin).